A 235-amino-acid chain; its full sequence is Putative uridine kinase C227.14 (235 aa).

Residue 36–43 (GGPGSGKS) coordinates ATP.

It belongs to the uridine kinase family.

It localises to the cytoplasm. The protein resides in the nucleus. The catalysed reaction is uridine + ATP = UMP + ADP + H(+). It catalyses the reaction cytidine + ATP = CMP + ADP + H(+). It participates in pyrimidine metabolism; CTP biosynthesis via salvage pathway; CTP from cytidine: step 1/3. It functions in the pathway pyrimidine metabolism; UMP biosynthesis via salvage pathway; UMP from uridine: step 1/1. This chain is Putative uridine kinase C227.14, found in Schizosaccharomyces pombe (strain 972 / ATCC 24843) (Fission yeast).